Reading from the N-terminus, the 695-residue chain is Elongation factor G 2 (695 aa).

The tr-type G domain maps to 5–280 (SLYRNIGIFA…AVVDYLPSPT (276 aa)). GTP is bound by residues 14–21 (AHVDAGKT), 78–82 (DTPGH), and 132–135 (NKLD).

This sequence belongs to the TRAFAC class translation factor GTPase superfamily. Classic translation factor GTPase family. EF-G/EF-2 subfamily.

It is found in the cytoplasm. Functionally, catalyzes the GTP-dependent ribosomal translocation step during translation elongation. During this step, the ribosome changes from the pre-translocational (PRE) to the post-translocational (POST) state as the newly formed A-site-bound peptidyl-tRNA and P-site-bound deacylated tRNA move to the P and E sites, respectively. Catalyzes the coordinated movement of the two tRNA molecules, the mRNA and conformational changes in the ribosome. This is Elongation factor G 2 from Vibrio cholerae serotype O1 (strain ATCC 39315 / El Tor Inaba N16961).